The following is a 237-amino-acid chain: MQKQAELYRGKAKTVYSTENPDLLVLEFRNDTSAGDGARIEQFDRKGMVNNKFNHFIMTKLAEAGIPTQMERLLSDTECLVKKLEMVPVECVVRNRAAGSLVKRLGVEEGMELNPPIFDLFLKNDALHDPMVNSSYCETFGWVSQENLARMKELTYKANDVLKKLFDDAGLILVDFKLEFGLYKGEVVLGDEFSPDGSRLWDKETLDKMDKDRFRQSLGGLIEAYEAVAHRLGVKLD.

Belongs to the SAICAR synthetase family.

It catalyses the reaction 5-amino-1-(5-phospho-D-ribosyl)imidazole-4-carboxylate + L-aspartate + ATP = (2S)-2-[5-amino-1-(5-phospho-beta-D-ribosyl)imidazole-4-carboxamido]succinate + ADP + phosphate + 2 H(+). It functions in the pathway purine metabolism; IMP biosynthesis via de novo pathway; 5-amino-1-(5-phospho-D-ribosyl)imidazole-4-carboxamide from 5-amino-1-(5-phospho-D-ribosyl)imidazole-4-carboxylate: step 1/2. This chain is Phosphoribosylaminoimidazole-succinocarboxamide synthase, found in Salmonella agona (strain SL483).